The primary structure comprises 360 residues: D-alanine--D-alanine ligase (360 aa).

An ATP-grasp domain is found at 146–352 (KICAEHAGLH…FSQLIDRLLQ (207 aa)). An ATP-binding site is contributed by 179-234 (LEEFTLPFFVKPASQGSSIGITKVHRPEELAAALEKAFMVDTKVLIEKTIEGREIE). Residues Asp-305, Glu-319, and Asn-321 each coordinate Mg(2+).

The protein belongs to the D-alanine--D-alanine ligase family. The cofactor is Mg(2+). Mn(2+) is required as a cofactor.

It is found in the cytoplasm. It catalyses the reaction 2 D-alanine + ATP = D-alanyl-D-alanine + ADP + phosphate + H(+). It functions in the pathway cell wall biogenesis; peptidoglycan biosynthesis. In terms of biological role, cell wall formation. In Prosthecochloris aestuarii (strain DSM 271 / SK 413), this protein is D-alanine--D-alanine ligase.